The following is a 91-amino-acid chain: Putative regulatory protein Moth_0891 (91 aa).

The protein belongs to the RemA family.

The chain is Putative regulatory protein Moth_0891 from Moorella thermoacetica (strain ATCC 39073 / JCM 9320).